The primary structure comprises 290 residues: Glycine--tRNA ligase alpha subunit (290 aa).

Belongs to the class-II aminoacyl-tRNA synthetase family. As to quaternary structure, tetramer of two alpha and two beta subunits.

It localises to the cytoplasm. It carries out the reaction tRNA(Gly) + glycine + ATP = glycyl-tRNA(Gly) + AMP + diphosphate. The sequence is that of Glycine--tRNA ligase alpha subunit from Fusobacterium nucleatum subsp. nucleatum (strain ATCC 25586 / DSM 15643 / BCRC 10681 / CIP 101130 / JCM 8532 / KCTC 2640 / LMG 13131 / VPI 4355).